The primary structure comprises 365 residues: Histidinol-phosphate aminotransferase 2 (365 aa).

Lysine 221 is subject to N6-(pyridoxal phosphate)lysine.

The protein belongs to the class-II pyridoxal-phosphate-dependent aminotransferase family. Histidinol-phosphate aminotransferase subfamily. Homodimer. Pyridoxal 5'-phosphate is required as a cofactor.

The enzyme catalyses L-histidinol phosphate + 2-oxoglutarate = 3-(imidazol-4-yl)-2-oxopropyl phosphate + L-glutamate. The protein operates within amino-acid biosynthesis; L-histidine biosynthesis; L-histidine from 5-phospho-alpha-D-ribose 1-diphosphate: step 7/9. This Bradyrhizobium diazoefficiens (strain JCM 10833 / BCRC 13528 / IAM 13628 / NBRC 14792 / USDA 110) protein is Histidinol-phosphate aminotransferase 2 (hisC2).